The sequence spans 294 residues: 4-hydroxy-tetrahydrodipicolinate synthase (294 aa).

Residue Thr47 coordinates pyruvate. The active-site Proton donor/acceptor is Tyr135. Lys163 functions as the Schiff-base intermediate with substrate in the catalytic mechanism. Thr205 lines the pyruvate pocket.

The protein belongs to the DapA family. As to quaternary structure, homotetramer; dimer of dimers.

Its subcellular location is the cytoplasm. The catalysed reaction is L-aspartate 4-semialdehyde + pyruvate = (2S,4S)-4-hydroxy-2,3,4,5-tetrahydrodipicolinate + H2O + H(+). It functions in the pathway amino-acid biosynthesis; L-lysine biosynthesis via DAP pathway; (S)-tetrahydrodipicolinate from L-aspartate: step 3/4. Its function is as follows. Catalyzes the condensation of (S)-aspartate-beta-semialdehyde [(S)-ASA] and pyruvate to 4-hydroxy-tetrahydrodipicolinate (HTPA). This is 4-hydroxy-tetrahydrodipicolinate synthase from Rickettsia peacockii (strain Rustic).